Consider the following 383-residue polypeptide: Succinyl-diaminopimelate desuccinylase (383 aa).

Residue His74 participates in Zn(2+) binding. Asp76 is a catalytic residue. Residue Asp107 coordinates Zn(2+). Glu141 acts as the Proton acceptor in catalysis. Zn(2+) contacts are provided by Glu142, Glu170, and His356.

It belongs to the peptidase M20A family. DapE subfamily. As to quaternary structure, homodimer. Requires Zn(2+) as cofactor. Co(2+) is required as a cofactor.

The enzyme catalyses N-succinyl-(2S,6S)-2,6-diaminopimelate + H2O = (2S,6S)-2,6-diaminopimelate + succinate. It functions in the pathway amino-acid biosynthesis; L-lysine biosynthesis via DAP pathway; LL-2,6-diaminopimelate from (S)-tetrahydrodipicolinate (succinylase route): step 3/3. Functionally, catalyzes the hydrolysis of N-succinyl-L,L-diaminopimelic acid (SDAP), forming succinate and LL-2,6-diaminopimelate (DAP), an intermediate involved in the bacterial biosynthesis of lysine and meso-diaminopimelic acid, an essential component of bacterial cell walls. This chain is Succinyl-diaminopimelate desuccinylase, found in Cupriavidus pinatubonensis (strain JMP 134 / LMG 1197) (Cupriavidus necator (strain JMP 134)).